Here is a 322-residue protein sequence, read N- to C-terminus: Exosome complex component RRP4 homolog (322 aa).

One can recognise an S1 motif domain in the interval 94–172; that stretch reads GDIVVGRVIE…HDGSLQLQAR (79 aa). In terms of domain architecture, KH spans 182–237; sequence GQLLKVDPYLVKRSKHHFHYVESLGIDLIIGCNGFIWVGEHVEVRDPMAIDDQKDE.

The protein belongs to the RRP4 family. In terms of assembly, component of the RNA exosome complex. Interacts with RPP41. As to expression, expressed in roots, stems, rosette and cauline leaves, flowers and siliques.

The protein resides in the cytoplasm. It is found in the nucleus. It localises to the nucleolus. Functionally, non-catalytic component of the RNA exosome complex which has 3'-&gt;5' exoribonuclease activity and participates in a multitude of cellular RNA processing, maturation and degradation events. In vitro, is an active and distributive 3'-&gt;5' exonuclease requiring a free 3'-OH on the substrate and releasing nucleoside 5'-monophosphates. Required for normal embryo development. This chain is Exosome complex component RRP4 homolog, found in Arabidopsis thaliana (Mouse-ear cress).